We begin with the raw amino-acid sequence, 420 residues long: Acetyl-CoA acetyltransferase, mitochondrial (420 aa).

The transit peptide at 1–33 (MAFCGPRTAARLSHSTRALHYTHRGHVSQRTLN) directs the protein to the mitochondrion. Residue cysteine 119 is the Acyl-thioester intermediate of the active site. CoA is bound by residues tyrosine 212, 251 to 253 (RVD), and lysine 256. Tyrosine 212 provides a ligand contact to K(+). Residues alanine 273, alanine 274, and alanine 276 each contribute to the K(+) site. Serine 277 serves as a coordination point for CoA. Valine 374 contacts K(+). The Proton donor/acceptor role is filled by cysteine 406.

It belongs to the thiolase-like superfamily. Thiolase family. In terms of assembly, homotetramer.

The protein resides in the mitochondrion. The catalysed reaction is 2 acetyl-CoA = acetoacetyl-CoA + CoA. It carries out the reaction propanoyl-CoA + acetyl-CoA = 2-methyl-3-oxobutanoyl-CoA + CoA. Its pathway is lipid metabolism; fatty acid beta-oxidation. In terms of biological role, this is one of the enzymes that catalyzes the last step of the mitochondrial beta-oxidation pathway, an aerobic process breaking down fatty acids into acetyl-CoA. Using free coenzyme A/CoA, catalyzes the thiolytic cleavage of medium- to long-chain 3-oxoacyl-CoAs into acetyl-CoA and a fatty acyl-CoA shortened by two carbon atoms. The activity of the enzyme is reversible and it can also catalyze the condensation of two acetyl-CoA molecules into acetoacetyl-CoA. Thereby, it plays a major role in ketone body metabolism. In Xenopus tropicalis (Western clawed frog), this protein is Acetyl-CoA acetyltransferase, mitochondrial (acat1).